Consider the following 508-residue polypeptide: Cytochrome P450 monooxygenase pkfB (508 aa).

The helical transmembrane segment at 9 to 29 (FSLGLSQILVCLALLYAAIHI) threads the bilayer. Asn-57 and Asn-305 each carry an N-linked (GlcNAc...) asparagine glycan. A heme-binding site is contributed by Cys-450.

It belongs to the cytochrome P450 family. Heme serves as cofactor.

The protein localises to the membrane. Its pathway is secondary metabolite biosynthesis. Functionally, cytochrome P450 monooxygenase; part of the gene cluster that mediates the biosynthesis of aspernidine A, a prenylated isoindolinone. The starting point of the biosynthesis of aspernidin A is the production of orsellinaldehyde by the non-reducing polyketide synthase pkfA. Hydroxylation, methylation of one of the phenol groups, and prenylation, presumably catalyzed by the prenyltransferase pkfE, would be needed to yield aspernidine D. Subsequently, the cytochrome P450 monooxygenase pkfB is responsible for hydroxylation of aspernidine D to yield aspernidine E. The dehydrogenase pkfF may be responsible for further oxidation of aspernidine E to form a dialdehyde intermediate which is further transformed in a series of steps, some of which are enzyme-mediated, to generate aspernidine A. The possibility that additional enzymes outside of the cluster are involved in aspernidine A biosynthesis cannot be excluded. The polypeptide is Cytochrome P450 monooxygenase pkfB (Emericella nidulans (strain FGSC A4 / ATCC 38163 / CBS 112.46 / NRRL 194 / M139) (Aspergillus nidulans)).